Reading from the N-terminus, the 476-residue chain is CDK5 and ABL1 enzyme substrate 2 (476 aa).

A disordered region spans residues 1–119; it reads MAAAAAGGAP…GLGLDGQRQR (119 aa). Over residues 30 to 40 the composition is skewed to basic residues; that stretch reads PRRRGDSRRRQ. Pro residues predominate over residues 65-96; that stretch reads PAPPPPPPTEAREAPAPPPAPPGGLPGLPARP. Serine 128 and serine 206 each carry phosphoserine. The tract at residues 256-295 is disordered; that stretch reads DSHGLLPQPRPSIPRAPPGSRHKPVPTKSTPAGTELGSDG. Residues 263–272 show a composition bias toward pro residues; sequence QPRPSIPRAP.

This sequence belongs to the cyclin family. As to quaternary structure, binds to CDK3, CDK5 and ABL1. The C-terminal cyclin-box-like region binds to CDK5. Widely expressed.

Functionally, unknown. Probably involved in G1-S cell cycle transition. This Mus musculus (Mouse) protein is CDK5 and ABL1 enzyme substrate 2 (Cables2).